The sequence spans 72 residues: UPF0352 protein swp_2271 (72 aa).

Belongs to the UPF0352 family.

This chain is UPF0352 protein swp_2271, found in Shewanella piezotolerans (strain WP3 / JCM 13877).